Consider the following 143-residue polypeptide: Transcriptional regulator MraZ (143 aa).

SpoVT-AbrB domains follow at residues 6-49 and 78-121; these read TYNH…NEAE and SDET…DLKV.

This sequence belongs to the MraZ family. In terms of assembly, forms oligomers.

It localises to the cytoplasm. It is found in the nucleoid. The polypeptide is Transcriptional regulator MraZ (Spiroplasma kunkelii).